We begin with the raw amino-acid sequence, 117 residues long: Large ribosomal subunit protein bL20c (117 aa).

The protein belongs to the bacterial ribosomal protein bL20 family.

The protein localises to the plastid. It localises to the chloroplast. Binds directly to 23S ribosomal RNA and is necessary for the in vitro assembly process of the 50S ribosomal subunit. It is not involved in the protein synthesizing functions of that subunit. This is Large ribosomal subunit protein bL20c from Olimarabidopsis pumila (Dwarf rocket).